The following is a 256-amino-acid chain: tRNA pseudouridine synthase A 1 (256 aa).

Catalysis depends on Asp53, which acts as the Nucleophile. Position 111 (Tyr111) interacts with substrate.

It belongs to the tRNA pseudouridine synthase TruA family. In terms of assembly, homodimer.

The enzyme catalyses uridine(38/39/40) in tRNA = pseudouridine(38/39/40) in tRNA. In terms of biological role, formation of pseudouridine at positions 38, 39 and 40 in the anticodon stem and loop of transfer RNAs. In Protochlamydia amoebophila (strain UWE25), this protein is tRNA pseudouridine synthase A 1.